The primary structure comprises 580 residues: Pescadillo homolog (580 aa).

Residues 291–303 (EPEEENEVDEFPA) show a composition bias toward acidic residues. Positions 291–321 (EPEEENEVDEFPADPENAGQEEEQKKQLQEE) are disordered. Residues 312 to 321 (EEQKKQLQEE) show a composition bias toward basic and acidic residues. The BRCT domain occupies 323-416 (KHKSMFVGLK…MLLPVEDYFP (94 aa)). A disordered region spans residues 448–496 (KGENPEDDDDDDEEDDEDEEEDDEDEDDEENEEEEEDKKLRHLENKKVG). Positions 452-483 (PEDDDDDDEEDDEDEEEDDEDEDDEENEEEEE) are enriched in acidic residues. A compositionally biased stretch (basic and acidic residues) spans 484–494 (DKKLRHLENKK).

Belongs to the pescadillo family. In terms of assembly, component of the PeBoW complex, composed of bop1, pes1 and wdr12. The complex is held together by bop1, which interacts with pes1 via its N-terminal domain and with wdr12 via a high-affinity interaction between the seven-bladed beta-propeller domains of the 2 proteins. The PeBoW complex associates with the 66S pre-ribosome.

It is found in the nucleus. It localises to the nucleolus. The protein localises to the nucleoplasm. In terms of biological role, component of the PeBoW complex, which is required for maturation of 28S and 5.8S ribosomal RNAs and formation of the 60S ribosome. The protein is Pescadillo homolog (pes1) of Xenopus tropicalis (Western clawed frog).